Reading from the N-terminus, the 616-residue chain is ATP-dependent RNA helicase VAD1 (616 aa).

Residues Met1–Gly35 are disordered. Residues Ser36–Glu64 carry the Q motif motif. The 172-residue stretch at Ile67–Ile238 folds into the Helicase ATP-binding domain. Residue Ala80–Thr87 coordinates ATP. The short motif at Asp186–Asp189 is the DEAD box element. The Helicase C-terminal domain occupies Gly248 to Leu408. The tract at residues Glu416–Ala616 is disordered. Composition is skewed to low complexity over residues Ala427–Arg441, Pro458–Pro500, and Tyr508–Gln523. A compositionally biased stretch (polar residues) spans Pro529–Thr545. Low complexity-rich tracts occupy residues Pro550 to Gly579 and Ala606 to Ala616.

It belongs to the DEAD box helicase family. DDX6/DHH1 subfamily.

The protein resides in the cytoplasm. Its subcellular location is the P-body. The catalysed reaction is ATP + H2O = ADP + phosphate + H(+). Its function is as follows. ATP-dependent RNA helicase involved in mRNA turnover, and more specifically in mRNA decapping. Is involved in G1/S DNA-damage checkpoint recovery, probably through the regulation of the translational status of a subset of mRNAs. May also have a role in translation and mRNA nuclear export. Blocks autophagy in nutrient-rich conditions by, at least partly, binding and repressing the expression of a set of ATG genes, including ATG3, ATG7, ATG8, ATG19, ATG20 and ATG22. VAD1-mediated repression of autophagy is regulated by TOR-dependent phosphorylation of the decapping enzyme DCP2. Regulates multiple virulence-associated genes. Repression of autophagy by VAD1 also regulates the pathogenesis. This Cryptococcus neoformans var. grubii serotype A (strain H99 / ATCC 208821 / CBS 10515 / FGSC 9487) (Filobasidiella neoformans var. grubii) protein is ATP-dependent RNA helicase VAD1.